We begin with the raw amino-acid sequence, 96 residues long: Integration host factor subunit beta (96 aa).

A disordered region spans residues R59–L86. Basic and acidic residues predominate over residues L72–L86.

The protein belongs to the bacterial histone-like protein family. In terms of assembly, heterodimer of an alpha and a beta chain.

Its function is as follows. This protein is one of the two subunits of integration host factor, a specific DNA-binding protein that functions in genetic recombination as well as in transcriptional and translational control. In Pseudoalteromonas atlantica (strain T6c / ATCC BAA-1087), this protein is Integration host factor subunit beta.